Reading from the N-terminus, the 138-residue chain is Large ribosomal subunit protein uL16 (138 aa).

Belongs to the universal ribosomal protein uL16 family. As to quaternary structure, part of the 50S ribosomal subunit.

Functionally, binds 23S rRNA and is also seen to make contacts with the A and possibly P site tRNAs. The protein is Large ribosomal subunit protein uL16 of Gluconacetobacter diazotrophicus (strain ATCC 49037 / DSM 5601 / CCUG 37298 / CIP 103539 / LMG 7603 / PAl5).